A 227-amino-acid polypeptide reads, in one-letter code: Ribonuclease 3 (227 aa).

Residues Leu-4 to Gly-126 form the RNase III domain. A Mg(2+)-binding site is contributed by Glu-39. Asp-43 is a catalytic residue. Residues Asp-112 and Glu-115 each contribute to the Mg(2+) site. Glu-115 is an active-site residue. Residues Asp-153–Ile-226 form the DRBM domain.

It belongs to the ribonuclease III family. In terms of assembly, homodimer. Requires Mg(2+) as cofactor.

It localises to the cytoplasm. The enzyme catalyses Endonucleolytic cleavage to 5'-phosphomonoester.. In terms of biological role, digests double-stranded RNA. Involved in the processing of primary rRNA transcript to yield the immediate precursors to the large and small rRNAs (23S and 16S). Processes some mRNAs, and tRNAs when they are encoded in the rRNA operon. Processes pre-crRNA and tracrRNA of type II CRISPR loci if present in the organism. This Haemophilus influenzae (strain 86-028NP) protein is Ribonuclease 3.